Reading from the N-terminus, the 418-residue chain is Histidine--tRNA ligase (418 aa).

The protein belongs to the class-II aminoacyl-tRNA synthetase family. Homodimer.

It is found in the cytoplasm. It carries out the reaction tRNA(His) + L-histidine + ATP = L-histidyl-tRNA(His) + AMP + diphosphate + H(+). This Thermoanaerobacter pseudethanolicus (strain ATCC 33223 / 39E) (Clostridium thermohydrosulfuricum) protein is Histidine--tRNA ligase.